Consider the following 185-residue polypeptide: Shikimate kinase (185 aa).

ATP is bound at residue 21–26 (GVGKTT). Threonine 25 contacts Mg(2+). Aspartate 43, arginine 67, and glycine 90 together coordinate substrate. Arginine 129 provides a ligand contact to ATP. A substrate-binding site is contributed by arginine 147.

Belongs to the shikimate kinase family. In terms of assembly, monomer. Mg(2+) serves as cofactor.

It localises to the cytoplasm. It catalyses the reaction shikimate + ATP = 3-phosphoshikimate + ADP + H(+). The protein operates within metabolic intermediate biosynthesis; chorismate biosynthesis; chorismate from D-erythrose 4-phosphate and phosphoenolpyruvate: step 5/7. In terms of biological role, catalyzes the specific phosphorylation of the 3-hydroxyl group of shikimic acid using ATP as a cosubstrate. The polypeptide is Shikimate kinase (Bacillus pumilus (strain SAFR-032)).